A 99-amino-acid polypeptide reads, in one-letter code: SAGA-associated factor 11 (99 aa).

The SGF11-type zinc finger occupies 71–92 (FYCENCGREVSGNRFAAHLQRC).

This sequence belongs to the SGF11 family. In terms of assembly, component of the 1.8 MDa SAGA transcription coactivator-HAT complex. SAGA is built of 5 distinct domains with specialized functions. Within the SAGA complex, SUS1, SGF11, SGF73 and UBP8 form an additional subcomplex of SAGA called the DUB module (deubiquitination module). Interacts directly with SGF73, SUS1 and UBP8.

It is found in the nucleus. In terms of biological role, functions as a component of the transcription regulatory histone acetylation (HAT) complex SAGA. At the promoters, SAGA is required for recruitment of the basal transcription machinery. It influences RNA polymerase II transcriptional activity through different activities such as TBP interaction and promoter selectivity, interaction with transcription activators, and chromatin modification through histone acetylation and deubiquitination. SAGA acetylates nucleosomal histone H3 to some extent (to form H3K9ac, H3K14ac, H3K18ac and H3K23ac). SAGA interacts with DNA via upstream activating sequences (UASs). Involved in transcriptional regulation of a subset of SAGA-regulated genes. Within the SAGA complex, participates in a subcomplex, that specifically deubiquitinates histones H2B. The chain is SAGA-associated factor 11 from Candida glabrata (strain ATCC 2001 / BCRC 20586 / JCM 3761 / NBRC 0622 / NRRL Y-65 / CBS 138) (Yeast).